The chain runs to 357 residues: tRNA N6-adenosine threonylcarbamoyltransferase (357 aa).

Fe cation is bound by residues His-115 and His-119. Residues 137 to 141 (LASGG), Asp-170, Gly-183, and Asn-281 each bind substrate. Asp-309 serves as a coordination point for Fe cation.

This sequence belongs to the KAE1 / TsaD family. Fe(2+) serves as cofactor.

It is found in the cytoplasm. The catalysed reaction is L-threonylcarbamoyladenylate + adenosine(37) in tRNA = N(6)-L-threonylcarbamoyladenosine(37) in tRNA + AMP + H(+). Its function is as follows. Required for the formation of a threonylcarbamoyl group on adenosine at position 37 (t(6)A37) in tRNAs that read codons beginning with adenine. Is involved in the transfer of the threonylcarbamoyl moiety of threonylcarbamoyl-AMP (TC-AMP) to the N6 group of A37, together with TsaE and TsaB. TsaD likely plays a direct catalytic role in this reaction. The sequence is that of tRNA N6-adenosine threonylcarbamoyltransferase from Afipia carboxidovorans (strain ATCC 49405 / DSM 1227 / KCTC 32145 / OM5) (Oligotropha carboxidovorans).